The chain runs to 880 residues: Probable dipeptidyl-aminopeptidase B (880 aa).

Basic and acidic residues predominate over residues 1–26; that stretch reads MPRQRAPKEEEAELLTKQERSARSSE. The interval 1–71 is disordered; that stretch reads MPRQRAPKEE…KYTDEDDEAQ (71 aa). Residues 1 to 93 lie on the Cytoplasmic side of the membrane; sequence MPRQRAPKEE…PISVDKKTRR (93 aa). Positions 30–40 are enriched in low complexity; it reads DTSISSISTTS. The helical; Signal-anchor for type II membrane protein transmembrane segment at 94-114 threads the bilayer; sequence WLWIVGIACVTGWALALVFFL. Topologically, residues 115 to 880 are vacuolar; it reads MSGSYKHVST…AQVDARMERR (766 aa). A glycan (N-linked (GlcNAc...) asparagine) is linked at N533. The Charge relay system role is filled by S724. An N-linked (GlcNAc...) asparagine glycan is attached at N778. Catalysis depends on charge relay system residues D801 and H834.

The protein belongs to the peptidase S9B family.

It localises to the vacuole membrane. It catalyses the reaction Release of an N-terminal dipeptide, Xaa-Yaa-|-Zaa-, from a polypeptide, preferentially when Yaa is Pro, provided Zaa is neither Pro nor hydroxyproline.. Type IV dipeptidyl-peptidase which removes N-terminal dipeptides sequentially from polypeptides having unsubstituted N-termini provided that the penultimate residue is proline. In Pyrenophora tritici-repentis (strain Pt-1C-BFP) (Wheat tan spot fungus), this protein is Probable dipeptidyl-aminopeptidase B (dapB).